A 1462-amino-acid polypeptide reads, in one-letter code: Glucosyltransferase-S (1462 aa).

Residues 35-164 form a disordered region; it reads SSVSAETEQQ…RQTAAQENKN (130 aa). Polar residues predominate over residues 37–52; it reads VSAETEQQTSDKVVTQ. Residues 71-85 are compositionally biased toward low complexity; the sequence is TKQAQTEQTQAQSQA. Residues 86–108 are compositionally biased toward polar residues; that stretch reads NVADTSTSITKETPSQNITTQAN. A compositionally biased stretch (basic and acidic residues) spans 109–133; that stretch reads SDDKTVTNTKSEEAQTSEERTKQAE. The segment covering 134-149 has biased composition (low complexity); the sequence is EAQATASSQALTQAKA. The segment covering 154-163 has biased composition (polar residues); that stretch reads QRQTAAQENK. 14 Cell wall-binding repeats span residues 171-190, 192-211, 1095-1115, 1116-1136, 1137-1156, 1180-1201, 1202-1221, 1223-1244, 1246-1266, 1267-1286, 1310-1330, 1331-1350, 1352-1372, and 1374-1394; these read IPNV…DGQP, KNFA…NTGA, STGF…GYQA, KNSF…NGHM, VYGL…NGVQ, SNGY…SGVM, AVGL…DGYQ, KGAW…SGNM, VNRF…DGIA, LVGV…DGKQ, RNIF…DGVA, VTGS…DGKQ, KGSF…SGEL, and VNRF…NGEA.

It belongs to the glycosyl hydrolase 70 family.

Its subcellular location is the secreted. It carries out the reaction [(1-&gt;6)-alpha-D-glucosyl](n) + sucrose = [(1-&gt;6)-alpha-D-glucosyl](n+1) + D-fructose. Its function is as follows. Production of extracellular glucans, that are thought to play a key role in the development of the dental plaque because of their ability to adhere to smooth surfaces and mediate the aggregation of bacterial cells and food debris. In Streptococcus mutans serotype c (strain ATCC 700610 / UA159), this protein is Glucosyltransferase-S (gtfD).